The chain runs to 302 residues: Tyrosine recombinase XerC (302 aa).

In terms of domain architecture, Core-binding (CB) spans 6-90 (DLEVTCLQDY…AIKQWGEFLL (85 aa)). A Tyr recombinase domain is found at 111–290 (PLPKNMDVDS…DFQHLAKVYD (180 aa)). Active-site residues include R150, K174, H242, R245, and H268. Residue Y277 is the O-(3'-phospho-DNA)-tyrosine intermediate of the active site.

This sequence belongs to the 'phage' integrase family. XerC subfamily. In terms of assembly, forms a cyclic heterotetrameric complex composed of two molecules of XerC and two molecules of XerD.

The protein localises to the cytoplasm. Site-specific tyrosine recombinase, which acts by catalyzing the cutting and rejoining of the recombining DNA molecules. The XerC-XerD complex is essential to convert dimers of the bacterial chromosome into monomers to permit their segregation at cell division. It also contributes to the segregational stability of plasmids. The sequence is that of Tyrosine recombinase XerC from Shewanella putrefaciens (strain CN-32 / ATCC BAA-453).